Here is a 510-residue protein sequence, read N- to C-terminus: Histidine ammonia-lyase (510 aa).

Residues 143-145 (ASG) constitute a cross-link (5-imidazolinone (Ala-Gly)). Ser144 is modified (2,3-didehydroalanine (Ser)).

It belongs to the PAL/histidase family. Post-translationally, contains an active site 4-methylidene-imidazol-5-one (MIO), which is formed autocatalytically by cyclization and dehydration of residues Ala-Ser-Gly.

The protein localises to the cytoplasm. It carries out the reaction L-histidine = trans-urocanate + NH4(+). The protein operates within amino-acid degradation; L-histidine degradation into L-glutamate; N-formimidoyl-L-glutamate from L-histidine: step 1/3. This Yersinia pseudotuberculosis serotype I (strain IP32953) protein is Histidine ammonia-lyase.